Here is a 472-residue protein sequence, read N- to C-terminus: Nuclear receptor subfamily 0 group B member 1 (472 aa).

3 repeat units span residues Met1–Cys67, Phe68–Cys135, and Phe136–Tyr202. Positions Met1–Val255 are 4 X 67 AA tandem repeats. 3 short sequence motifs (LXXLL motif) span residues Leu13 to Leu17, Leu80 to Leu84, and Leu148 to Leu152. One can recognise an NR LBD domain in the interval Gln190 to Lys471. The stretch at Val203–Val255 is one 4; truncated repeat. 2 disordered regions span residues Val214–Trp237 and Arg326–Gln345. Residues Met463–Leu468 carry the AF-2 motif motif.

The protein belongs to the nuclear hormone receptor family. NR0 subfamily. As to quaternary structure, homodimer. Interacts with NR5A1, NR5A2, NR0B2 and with COPS2. Interacts with ESRRB; represses ESRRB activity at the GATA6 promoter.

The protein resides in the nucleus. It is found in the cytoplasm. Functionally, nuclear receptor that lacks a DNA-binding domain and acts as a corepressor that inhibits the transcriptional activity of other nuclear receptors through heterodimeric interactions. Component of a cascade required for the development of the hypothalamic-pituitary-adrenal-gonadal axis. May also have a role in the development of the embryo and in the maintenance of embryonic stem cell pluripotency. This Rattus norvegicus (Rat) protein is Nuclear receptor subfamily 0 group B member 1 (Nr0b1).